The chain runs to 101 residues: Phosphoribosyl-AMP cyclohydrolase (101 aa).

D71 lines the Mg(2+) pocket. C72 is a Zn(2+) binding site. D73 and D75 together coordinate Mg(2+). Residues C88 and C95 each coordinate Zn(2+).

Belongs to the PRA-CH family. As to quaternary structure, homodimer. It depends on Mg(2+) as a cofactor. The cofactor is Zn(2+).

It localises to the cytoplasm. The catalysed reaction is 1-(5-phospho-beta-D-ribosyl)-5'-AMP + H2O = 1-(5-phospho-beta-D-ribosyl)-5-[(5-phospho-beta-D-ribosylamino)methylideneamino]imidazole-4-carboxamide. The protein operates within amino-acid biosynthesis; L-histidine biosynthesis; L-histidine from 5-phospho-alpha-D-ribose 1-diphosphate: step 3/9. Its function is as follows. Catalyzes the hydrolysis of the adenine ring of phosphoribosyl-AMP. This is Phosphoribosyl-AMP cyclohydrolase from Bacillus cereus (strain ATCC 10987 / NRS 248).